We begin with the raw amino-acid sequence, 322 residues long: uncharacterized protein (322 aa).

A disordered region spans residues 269-289 (QDEEEEPRDERRPRRRLGKAQ).

This is an uncharacterized protein from Sinorhizobium fredii (strain NBRC 101917 / NGR234).